Consider the following 172-residue polypeptide: Water stress-inducible protein Rab21 (172 aa).

The tract at residues 1-172 (MEHQGQHGHV…KIKEKLPGQH (172 aa)) is disordered. The Type A repeat unit spans residues 3-28 (HQGQHGHVTSRVDEYGNPVGTGAGHG). Residues 21–65 (VGTGAGHGQMGTAGMGTHGTTGGMGTHGTTGGMGTHGTTGTGGGQ) are compositionally biased toward gly residues. Residues 98-115 (RRKKGIKEKIKEKLPGGN) form a Type B repeat. The span at 124 to 139 (GGTGGAYGQQGHGTGM) shows a compositional bias: gly residues. The Type A repeat unit spans residues 125 to 149 (GTGGAYGQQGHGTGMTTGTTGAHGT). Over residues 140 to 153 (TTGTTGAHGTTTTD) the composition is skewed to low complexity. Residues 154–172 (TGEKKGIMDKIKEKLPGQH) are compositionally biased toward basic and acidic residues. One copy of the Type B repeat lies at 156-172 (EKKGIMDKIKEKLPGQH).

It belongs to the plant dehydrin family.

It localises to the cytoplasm. This Oryza sativa subsp. indica (Rice) protein is Water stress-inducible protein Rab21 (RAB21).